We begin with the raw amino-acid sequence, 668 residues long: CLK4-associating serine/arginine rich protein (668 aa).

Residue Ser-101 is modified to Phosphoserine. Disordered regions lie at residues 173-232 and 252-668; these read AEVE…GMAD and AKAL…HYRH. The segment covering 182 to 214 has biased composition (acidic residues); sequence PEEEESPAEEESNSDEDEVIPDIDVEVDVDELN. The span at 265–283 shows a compositional bias: basic residues; it reads RRSRRQRREFREKRLRGRK. Phosphoserine is present on residues Ser-285 and Ser-294. Residues 290–313 show a composition bias toward basic and acidic residues; it reads ARRDSPTYDPYKRSPSESSSESRS. The residue at position 327 (Thr-327) is a Phosphothreonine. Phosphoserine occurs at positions 331 and 335. Composition is skewed to low complexity over residues 340-353 and 378-395; these read AAAA…GAAP and SSSS…SRSS. A compositionally biased stretch (basic residues) spans 396-435; it reads SRSRRGYYRSGRHARSRSRSWSRSRSRSRRYSRSRSRGRR. Over residues 436 to 446 the composition is skewed to basic and acidic residues; the sequence is HSDGGSRDGHR. A compositionally biased stretch (basic residues) spans 475–486; that stretch reads RGARGPRHHSSS. Low complexity-rich tracts occupy residues 487 to 510 and 518 to 527; these read HSRS…SRSQ and QSHSQSQSHS. Ser-541 is modified (phosphoserine). Thr-567 carries the post-translational modification Phosphothreonine. A coiled-coil region spans residues 579 to 641; the sequence is ALNRQFKADK…ERQYSRQSRS (63 aa). Basic and acidic residues-rich tracts occupy residues 584–611 and 619–635; these read FKAD…ELRA and KERE…ERQY. Residues 636 to 645 are compositionally biased toward low complexity; the sequence is SRQSRSPSPR. A compositionally biased stretch (basic residues) spans 653–668; sequence SRRRSRSRSRSPHYRH.

Belongs to the splicing factor SR family. In terms of assembly, probably interacts with CLK4. Phosphorylated in vitro by CLK4. As to expression, highly expressed in brain. Expressed at intermediate level in lung and liver. In brain, it is expressed in the hippocampus, cerebellum and olfactory bulb.

Its subcellular location is the nucleus. It is found in the nucleoplasm. Functionally, probably functions as an alternative splicing regulator. May regulate the mRNA splicing of genes such as CLK1. May act by regulating members of the CLK kinase family. This Mus musculus (Mouse) protein is CLK4-associating serine/arginine rich protein (Clasrp).